The chain runs to 243 residues: Uridylate kinase (243 aa).

ATP is bound at residue 18 to 21 (KLGG). G59 lines the UMP pocket. The ATP site is built by G60 and R64. UMP-binding positions include D79 and 140 to 147 (MGMPYFST). Y173 and D176 together coordinate ATP.

This sequence belongs to the UMP kinase family. Homohexamer.

It is found in the cytoplasm. The enzyme catalyses UMP + ATP = UDP + ADP. Its pathway is pyrimidine metabolism; CTP biosynthesis via de novo pathway; UDP from UMP (UMPK route): step 1/1. Its activity is regulated as follows. Inhibited by UTP. Catalyzes the reversible phosphorylation of UMP to UDP. In Corynebacterium glutamicum (strain R), this protein is Uridylate kinase.